The following is a 109-amino-acid chain: Mannose-specific lectin (109 aa).

The Bulb-type lectin domain maps to 1–109 (DNILYSSEVL…PPIWATGTGR (109 aa)). C29 and C52 form a disulfide bridge. Residues 79-82 (TGTN) constitute a propeptide that is removed on maturation.

In terms of assembly, homotrimer or homotetramer.

The protein resides in the secreted. Mannose-specific lectin. Shows agglutinating activity toward rabbit erythrocytes and mitogenic activity towards mouse lymphocytes. The protein is Mannose-specific lectin of Aloe arborescens (Kidachi aloe).